The primary structure comprises 431 residues: Glucose-6-phosphate isomerase (431 aa).

Glutamate 284 serves as the catalytic Proton donor. Active-site residues include histidine 305 and lysine 420.

Belongs to the GPI family.

It is found in the cytoplasm. The catalysed reaction is alpha-D-glucose 6-phosphate = beta-D-fructose 6-phosphate. It functions in the pathway carbohydrate biosynthesis; gluconeogenesis. Its pathway is carbohydrate degradation; glycolysis; D-glyceraldehyde 3-phosphate and glycerone phosphate from D-glucose: step 2/4. Functionally, catalyzes the reversible isomerization of glucose-6-phosphate to fructose-6-phosphate. This chain is Glucose-6-phosphate isomerase, found in Mycoplasma genitalium (strain ATCC 33530 / DSM 19775 / NCTC 10195 / G37) (Mycoplasmoides genitalium).